Reading from the N-terminus, the 260-residue chain is CD27 antigen (260 aa).

Residues 1-19 form the signal peptide; it reads MARPHPWWLCVLGTLVGLS. Residues 20 to 191 are Extracellular-facing; the sequence is ATPAPKSCPE…RSLCSSDFIR (172 aa). TNFR-Cys repeat units lie at residues 26–63, 64–104, and 105–141; these read SCPERHYWAQGKLCCQMCEPGTFLVKDCDQHRKAAQCD, PCIP…NAEC, and ACRNGWQCRDKECTECDPLPNPSLTARSSQALSPHPQ. 8 cysteine pairs are disulfide-bonded: cysteine 27-cysteine 39, cysteine 40-cysteine 53, cysteine 43-cysteine 62, cysteine 65-cysteine 81, cysteine 84-cysteine 96, cysteine 87-cysteine 104, cysteine 106-cysteine 120, and cysteine 112-cysteine 117. An N-linked (GlcNAc...) asparagine glycan is attached at asparagine 95. A glycan (O-linked (GalNAc...) serine) is linked at serine 127. Residues 192–212 traverse the membrane as a helical segment; it reads ILVIFSGMFLVFTLAGALFLH. The Cytoplasmic segment spans residues 213–260; sequence QRRKYRSNKGESPVEPAEPCHYSCPREEEGSTIPIQEDYRKPEPACSP. At serine 219 the chain carries Phosphoserine. The interval 219–260 is disordered; that stretch reads SNKGESPVEPAEPCHYSCPREEEGSTIPIQEDYRKPEPACSP. Residues 249-260 show a composition bias toward basic and acidic residues; sequence EDYRKPEPACSP.

As to quaternary structure, homodimer. Interacts with SIVA1; may play a role in apoptosis through association with SIVA1. Interacts with TRAF2. Interacts ith PTPN6. In terms of processing, phosphorylated. Post-translationally, N-glycosylated. O-glycosylated with core 1 or possibly core 8 glycans. Found in most T-lymphocytes.

It localises to the cell membrane. Its function is as follows. Costimulatory immune-checkpoint receptor expressed at the surface of T-cells, NK-cells and B-cells which binds to and is activated by its ligand CD70/CD27L expressed by B-cells. The CD70-CD27 signaling pathway mediates antigen-specific T-cell activation and expansion which in turn provides immune surveillance of B-cells. Mechanistically, CD70 ligation activates the TRAF2-PTPN6 axis that subsequently inhibits LCK phosphorylation to promote phenotypic and transcriptional adaptations of T-cell memory. In addition, activation by CD70 on early progenitor cells provides a negative feedback signal to leukocyte differentiation during immune activation and thus modulates hematopoiesis. Negatively regulates the function of Th2 lymphocytes in the adipose tissue. This is CD27 antigen from Homo sapiens (Human).